We begin with the raw amino-acid sequence, 240 residues long: Octanoyltransferase (240 aa).

Positions 1–22 are disordered; that stretch reads MGTTGTNDGATTPPANTSTPAV. Residues 10 to 21 show a composition bias toward low complexity; sequence ATTPPANTSTPA. In terms of domain architecture, BPL/LPL catalytic spans 51–236; it reads EKIPDTILLL…NLVDALNGDL (186 aa). Substrate-binding positions include 89-96, 166-168, and 179-181; these read RGGRITWH, AIG, and GVA. Cys-197 functions as the Acyl-thioester intermediate in the catalytic mechanism.

This sequence belongs to the LipB family.

It is found in the cytoplasm. It carries out the reaction octanoyl-[ACP] + L-lysyl-[protein] = N(6)-octanoyl-L-lysyl-[protein] + holo-[ACP] + H(+). It participates in protein modification; protein lipoylation via endogenous pathway; protein N(6)-(lipoyl)lysine from octanoyl-[acyl-carrier-protein]: step 1/2. Its function is as follows. Catalyzes the transfer of endogenously produced octanoic acid from octanoyl-acyl-carrier-protein onto the lipoyl domains of lipoate-dependent enzymes. Lipoyl-ACP can also act as a substrate although octanoyl-ACP is likely to be the physiological substrate. This is Octanoyltransferase from Corynebacterium jeikeium (strain K411).